A 371-amino-acid polypeptide reads, in one-letter code: 4-hydroxybutyrate dehydrogenase (371 aa).

Residues 88-92, 126-130, and Lys148 each bind NAD(+); these read GSVID and TTCGT. 4 residues coordinate Fe cation: Asp182, His186, His253, and His267. Position 267 (His267) interacts with NAD(+).

Belongs to the iron-containing alcohol dehydrogenase family. In terms of assembly, homodimer. It depends on Fe(2+) as a cofactor. The cofactor is Cu(2+).

It carries out the reaction 4-hydroxybutanoate + NAD(+) = succinate semialdehyde + NADH + H(+). Its activity is regulated as follows. Inactivated by oxygen. Involved in the anaerobic succinate degradation pathway. Catalyzes the interconversion of gamma-hydroxybutyrate (GHB) and succinic semialdehyde (SSA). The protein is 4-hydroxybutyrate dehydrogenase of Clostridium kluyveri (strain ATCC 8527 / DSM 555 / NBRC 12016 / NCIMB 10680 / K1).